Here is a 524-residue protein sequence, read N- to C-terminus: 2-isopropylmalate synthase (524 aa).

The Pyruvate carboxyltransferase domain maps to 12-274 (VIIFDTTLRD…WNRIETTMLT (263 aa)). Mn(2+)-binding residues include D21, H209, H211, and N245. A regulatory domain region spans residues 398-524 (KLMSLTVIAG…EDAPAVAVAG (127 aa)).

This sequence belongs to the alpha-IPM synthase/homocitrate synthase family. LeuA type 1 subfamily. As to quaternary structure, homodimer. Mn(2+) is required as a cofactor.

It is found in the cytoplasm. It carries out the reaction 3-methyl-2-oxobutanoate + acetyl-CoA + H2O = (2S)-2-isopropylmalate + CoA + H(+). The protein operates within amino-acid biosynthesis; L-leucine biosynthesis; L-leucine from 3-methyl-2-oxobutanoate: step 1/4. In terms of biological role, catalyzes the condensation of the acetyl group of acetyl-CoA with 3-methyl-2-oxobutanoate (2-ketoisovalerate) to form 3-carboxy-3-hydroxy-4-methylpentanoate (2-isopropylmalate). The polypeptide is 2-isopropylmalate synthase (Rhodopseudomonas palustris (strain ATCC BAA-98 / CGA009)).